We begin with the raw amino-acid sequence, 708 residues long: Glycine--tRNA ligase beta subunit (708 aa).

It belongs to the class-II aminoacyl-tRNA synthetase family. As to quaternary structure, tetramer of two alpha and two beta subunits.

It localises to the cytoplasm. The enzyme catalyses tRNA(Gly) + glycine + ATP = glycyl-tRNA(Gly) + AMP + diphosphate. The polypeptide is Glycine--tRNA ligase beta subunit (Methylobacillus flagellatus (strain ATCC 51484 / DSM 6875 / VKM B-1610 / KT)).